Reading from the N-terminus, the 502-residue chain is NADH-quinone oxidoreductase subunit N (502 aa).

Transmembrane regions (helical) follow at residues 16-36 (TLVPMLIPIIGALFIIVIDLF), 47-67 (MLSLLILGVDFVALVDSAGVF), 85-105 (LAILSQFIIVGASMLFIPLAL), 113-133 (FSYPEFFALFLFMIAGFQFMV), 138-158 (LILIFVGLETASLALYTLIAM), 172-192 (FTMGALAAGFFSFGSMVFYAL), 213-233 (IGFVLVGVVFLLAAFGFKLSM), 248-268 (SAALAGYMSIVPKIAAFIVAM), 273-293 (FLIHSGVVWLEVILYMGVVVT), 310-330 (MLAYSSISHAGFVMAAILIGT), 337-357 (LFLYWILFSFTNLGSFSMLWI), 387-407 (ASIMALFMLSLAGIPPFALFW), 410-430 (MYLMSSAITGGYTVLALIMAL), and 470-490 (TIIGIAAIGTIFAFVAVNQLI).

It belongs to the complex I subunit 2 family. As to quaternary structure, NDH-1 is composed of 14 different subunits. Subunits NuoA, H, J, K, L, M, N constitute the membrane sector of the complex.

The protein resides in the cell inner membrane. The enzyme catalyses a quinone + NADH + 5 H(+)(in) = a quinol + NAD(+) + 4 H(+)(out). Functionally, NDH-1 shuttles electrons from NADH, via FMN and iron-sulfur (Fe-S) centers, to quinones in the respiratory chain. The immediate electron acceptor for the enzyme in this species is believed to be ubiquinone. Couples the redox reaction to proton translocation (for every two electrons transferred, four hydrogen ions are translocated across the cytoplasmic membrane), and thus conserves the redox energy in a proton gradient. This is NADH-quinone oxidoreductase subunit N from Sulfurimonas denitrificans (strain ATCC 33889 / DSM 1251) (Thiomicrospira denitrificans (strain ATCC 33889 / DSM 1251)).